A 67-amino-acid polypeptide reads, in one-letter code: Probable tautomerase bsl7456 (67 aa).

Proline 2 functions as the Proton acceptor; via imino nitrogen in the catalytic mechanism.

Belongs to the 4-oxalocrotonate tautomerase family.

The chain is Probable tautomerase bsl7456 from Bradyrhizobium diazoefficiens (strain JCM 10833 / BCRC 13528 / IAM 13628 / NBRC 14792 / USDA 110).